Here is a 382-residue protein sequence, read N- to C-terminus: Anhydro-N-acetylmuramic acid kinase (382 aa).

An ATP-binding site is contributed by 22-29 (GTSMDGVD).

Belongs to the anhydro-N-acetylmuramic acid kinase family.

The enzyme catalyses 1,6-anhydro-N-acetyl-beta-muramate + ATP + H2O = N-acetyl-D-muramate 6-phosphate + ADP + H(+). It participates in amino-sugar metabolism; 1,6-anhydro-N-acetylmuramate degradation. It functions in the pathway cell wall biogenesis; peptidoglycan recycling. Catalyzes the specific phosphorylation of 1,6-anhydro-N-acetylmuramic acid (anhMurNAc) with the simultaneous cleavage of the 1,6-anhydro ring, generating MurNAc-6-P. Is required for the utilization of anhMurNAc either imported from the medium or derived from its own cell wall murein, and thus plays a role in cell wall recycling. This Burkholderia lata (strain ATCC 17760 / DSM 23089 / LMG 22485 / NCIMB 9086 / R18194 / 383) protein is Anhydro-N-acetylmuramic acid kinase.